The following is a 382-amino-acid chain: Bifunctional enzyme IspD/IspF (382 aa).

The segment at 1 to 225 (MTGKPSIAAL…AEERMAMISR (225 aa)) is 2-C-methyl-D-erythritol 4-phosphate cytidylyltransferase. The tract at residues 225 to 382 (RTAMGFDVHG…AVATVRVPSI (158 aa)) is 2-C-methyl-D-erythritol 2,4-cyclodiphosphate synthase. Aspartate 231 and histidine 233 together coordinate a divalent metal cation. 4-CDP-2-C-methyl-D-erythritol 2-phosphate contacts are provided by residues 231 to 233 (DVH) and 257 to 258 (HS). Histidine 265 contacts a divalent metal cation. 4-CDP-2-C-methyl-D-erythritol 2-phosphate is bound by residues 279–281 (DIG), 355–358 (TTTE), phenylalanine 362, and arginine 365.

It in the N-terminal section; belongs to the IspD/TarI cytidylyltransferase family. IspD subfamily. The protein in the C-terminal section; belongs to the IspF family. The cofactor is a divalent metal cation.

The enzyme catalyses 2-C-methyl-D-erythritol 4-phosphate + CTP + H(+) = 4-CDP-2-C-methyl-D-erythritol + diphosphate. It carries out the reaction 4-CDP-2-C-methyl-D-erythritol 2-phosphate = 2-C-methyl-D-erythritol 2,4-cyclic diphosphate + CMP. It participates in isoprenoid biosynthesis; isopentenyl diphosphate biosynthesis via DXP pathway; isopentenyl diphosphate from 1-deoxy-D-xylulose 5-phosphate: step 2/6. Its pathway is isoprenoid biosynthesis; isopentenyl diphosphate biosynthesis via DXP pathway; isopentenyl diphosphate from 1-deoxy-D-xylulose 5-phosphate: step 4/6. Bifunctional enzyme that catalyzes the formation of 4-diphosphocytidyl-2-C-methyl-D-erythritol from CTP and 2-C-methyl-D-erythritol 4-phosphate (MEP) (IspD), and catalyzes the conversion of 4-diphosphocytidyl-2-C-methyl-D-erythritol 2-phosphate (CDP-ME2P) to 2-C-methyl-D-erythritol 2,4-cyclodiphosphate (ME-CPP) with a corresponding release of cytidine 5-monophosphate (CMP) (IspF). In Rhizorhabdus wittichii (strain DSM 6014 / CCUG 31198 / JCM 15750 / NBRC 105917 / EY 4224 / RW1) (Sphingomonas wittichii), this protein is Bifunctional enzyme IspD/IspF.